The primary structure comprises 41 residues: U15-myrmicitoxin-Tb1b (41 aa).

The first 25 residues, 1-25, serve as a signal peptide directing secretion; it reads MKIVKLITIFAMIATLMVTVTNGEA. His40 bears the Histidine amide mark.

In terms of tissue distribution, expressed by the venom gland.

The protein localises to the secreted. Functionally, venom protein with unknown function. Does not induce paralysis when a high dose is administered by intrathoracic injection into the blowfly Lucilia caesar. The sequence is that of U15-myrmicitoxin-Tb1b from Tetramorium bicarinatum (Tramp ant).